Here is a 151-residue protein sequence, read N- to C-terminus: MATLEQNLQQMLQGSVEDLGCELWGIECQRAGRFMTVRLYIDKEGGVTVDDCADVSRQVSAILDVEDPIADKYNLEVSSPGLDRPLFTLEQFQRYVGQEISVHLRIPMLDRRKWQGKLERIEGDMLTLIVDDQEQSFALSNIQKANVIPKF.

It belongs to the RimP family.

The protein localises to the cytoplasm. Functionally, required for maturation of 30S ribosomal subunits. This is Ribosome maturation factor RimP from Mannheimia succiniciproducens (strain KCTC 0769BP / MBEL55E).